A 565-amino-acid chain; its full sequence is Proline--tRNA ligase (565 aa).

It belongs to the class-II aminoacyl-tRNA synthetase family. ProS type 1 subfamily. As to quaternary structure, homodimer.

It is found in the cytoplasm. The enzyme catalyses tRNA(Pro) + L-proline + ATP = L-prolyl-tRNA(Pro) + AMP + diphosphate. In terms of biological role, catalyzes the attachment of proline to tRNA(Pro) in a two-step reaction: proline is first activated by ATP to form Pro-AMP and then transferred to the acceptor end of tRNA(Pro). As ProRS can inadvertently accommodate and process non-cognate amino acids such as alanine and cysteine, to avoid such errors it has two additional distinct editing activities against alanine. One activity is designated as 'pretransfer' editing and involves the tRNA(Pro)-independent hydrolysis of activated Ala-AMP. The other activity is designated 'posttransfer' editing and involves deacylation of mischarged Ala-tRNA(Pro). The misacylated Cys-tRNA(Pro) is not edited by ProRS. This is Proline--tRNA ligase from Francisella philomiragia subsp. philomiragia (strain ATCC 25017 / CCUG 19701 / FSC 153 / O#319-036).